A 183-amino-acid polypeptide reads, in one-letter code: Acireductone dioxygenase (183 aa).

The segment at 1-21 (MVQAWYMDSDTTTDQREEHQL) is disordered. Residues His90, His92, Glu96, and His135 each contribute to the Fe(2+) site. Positions 90, 92, 96, and 135 each coordinate Ni(2+).

The protein belongs to the acireductone dioxygenase (ARD) family. It depends on Fe(2+) as a cofactor. The cofactor is Ni(2+).

The protein resides in the cytoplasm. The protein localises to the nucleus. The catalysed reaction is 1,2-dihydroxy-5-(methylsulfanyl)pent-1-en-3-one + O2 = 4-methylsulfanyl-2-oxobutanoate + formate + 2 H(+). The enzyme catalyses 1,2-dihydroxy-5-(methylsulfanyl)pent-1-en-3-one + O2 = 3-(methylsulfanyl)propanoate + CO + formate + 2 H(+). It participates in amino-acid biosynthesis; L-methionine biosynthesis via salvage pathway; L-methionine from S-methyl-5-thio-alpha-D-ribose 1-phosphate: step 5/6. Functionally, catalyzes 2 different reactions between oxygen and the acireductone 1,2-dihydroxy-3-keto-5-methylthiopentene (DHK-MTPene) depending upon the metal bound in the active site. Fe-containing acireductone dioxygenase (Fe-ARD) produces formate and 2-keto-4-methylthiobutyrate (KMTB), the alpha-ketoacid precursor of methionine in the methionine recycle pathway. Ni-containing acireductone dioxygenase (Ni-ARD) produces methylthiopropionate, carbon monoxide and formate, and does not lie on the methionine recycle pathway. This is Acireductone dioxygenase from Ixodes scapularis (Black-legged tick).